Reading from the N-terminus, the 455-residue chain is uncharacterized protein (455 aa).

Positions 1-27 are cleaved as a signal peptide; sequence MSQRQQFQFLLSFLILIFLKFIIQIRC. Over 29–434 the chain is Extracellular; sequence ESNGVIIIKN…GDDENLINSS (406 aa). N136, N148, N210, and N298 each carry an N-linked (GlcNAc...) asparagine glycan. Residues 383 to 402 form a disordered region; that stretch reads SSSTTSTTSSSSSSSSSTTT. N-linked (GlcNAc...) asparagine glycans are attached at residues N421 and N432. Residues 435–455 traverse the membrane as a helical segment; it reads SVIKFSTPIIMIIIILINIKF.

The protein resides in the membrane. This is an uncharacterized protein from Dictyostelium discoideum (Social amoeba).